The chain runs to 174 residues: Crossover junction endodeoxyribonuclease RuvC (174 aa).

Active-site residues include aspartate 8, glutamate 68, and aspartate 140. Mg(2+) is bound by residues aspartate 8, glutamate 68, and aspartate 140.

The protein belongs to the RuvC family. As to quaternary structure, homodimer which binds Holliday junction (HJ) DNA. The HJ becomes 2-fold symmetrical on binding to RuvC with unstacked arms; it has a different conformation from HJ DNA in complex with RuvA. In the full resolvosome a probable DNA-RuvA(4)-RuvB(12)-RuvC(2) complex forms which resolves the HJ. Mg(2+) is required as a cofactor.

The protein localises to the cytoplasm. It carries out the reaction Endonucleolytic cleavage at a junction such as a reciprocal single-stranded crossover between two homologous DNA duplexes (Holliday junction).. In terms of biological role, the RuvA-RuvB-RuvC complex processes Holliday junction (HJ) DNA during genetic recombination and DNA repair. Endonuclease that resolves HJ intermediates. Cleaves cruciform DNA by making single-stranded nicks across the HJ at symmetrical positions within the homologous arms, yielding a 5'-phosphate and a 3'-hydroxyl group; requires a central core of homology in the junction. The consensus cleavage sequence is 5'-(A/T)TT(C/G)-3'. Cleavage occurs on the 3'-side of the TT dinucleotide at the point of strand exchange. HJ branch migration catalyzed by RuvA-RuvB allows RuvC to scan DNA until it finds its consensus sequence, where it cleaves and resolves the cruciform DNA. This Legionella pneumophila subsp. pneumophila (strain Philadelphia 1 / ATCC 33152 / DSM 7513) protein is Crossover junction endodeoxyribonuclease RuvC.